The chain runs to 128 residues: Small ribosomal subunit protein uS11 (128 aa).

This sequence belongs to the universal ribosomal protein uS11 family. As to quaternary structure, part of the 30S ribosomal subunit. Interacts with proteins S7 and S18. Binds to IF-3.

Functionally, located on the platform of the 30S subunit, it bridges several disparate RNA helices of the 16S rRNA. Forms part of the Shine-Dalgarno cleft in the 70S ribosome. The sequence is that of Small ribosomal subunit protein uS11 from Vesicomyosocius okutanii subsp. Calyptogena okutanii (strain HA).